We begin with the raw amino-acid sequence, 473 residues long: Siroheme synthase 2 (473 aa).

The precorrin-2 dehydrogenase /sirohydrochlorin ferrochelatase stretch occupies residues 1–204; the sequence is MDYFPIFCQL…NDHVQADQHV (204 aa). NAD(+) contacts are provided by residues 22–23 and 43–44; these read EI and CE. Serine 128 is modified (phosphoserine). The interval 216–473 is uroporphyrinogen-III C-methyltransferase; it reads GEVVLVGAGP…KVTECVAHVG (258 aa). Residue proline 225 coordinates S-adenosyl-L-methionine. The Proton acceptor role is filled by aspartate 248. Lysine 270 acts as the Proton donor in catalysis. Residues 301 to 303, isoleucine 306, 331 to 332, methionine 382, and glycine 411 each bind S-adenosyl-L-methionine; these read GGD and TA.

It in the N-terminal section; belongs to the precorrin-2 dehydrogenase / sirohydrochlorin ferrochelatase family. In the C-terminal section; belongs to the precorrin methyltransferase family.

The enzyme catalyses uroporphyrinogen III + 2 S-adenosyl-L-methionine = precorrin-2 + 2 S-adenosyl-L-homocysteine + H(+). The catalysed reaction is precorrin-2 + NAD(+) = sirohydrochlorin + NADH + 2 H(+). It catalyses the reaction siroheme + 2 H(+) = sirohydrochlorin + Fe(2+). It participates in cofactor biosynthesis; adenosylcobalamin biosynthesis; precorrin-2 from uroporphyrinogen III: step 1/1. The protein operates within cofactor biosynthesis; adenosylcobalamin biosynthesis; sirohydrochlorin from precorrin-2: step 1/1. Its pathway is porphyrin-containing compound metabolism; siroheme biosynthesis; precorrin-2 from uroporphyrinogen III: step 1/1. It functions in the pathway porphyrin-containing compound metabolism; siroheme biosynthesis; siroheme from sirohydrochlorin: step 1/1. It participates in porphyrin-containing compound metabolism; siroheme biosynthesis; sirohydrochlorin from precorrin-2: step 1/1. In terms of biological role, multifunctional enzyme that catalyzes the SAM-dependent methylations of uroporphyrinogen III at position C-2 and C-7 to form precorrin-2 via precorrin-1. Then it catalyzes the NAD-dependent ring dehydrogenation of precorrin-2 to yield sirohydrochlorin. Finally, it catalyzes the ferrochelation of sirohydrochlorin to yield siroheme. In Yersinia pseudotuberculosis serotype O:1b (strain IP 31758), this protein is Siroheme synthase 2.